A 1868-amino-acid polypeptide reads, in one-letter code: Protein TIC 214 (1868 aa).

6 helical membrane-spanning segments follow: residues 11 to 31, 64 to 84, 87 to 107, 126 to 146, 166 to 186, and 221 to 241; these read LLLL…YYGF, FIMG…HLAL, PHTL…FFWN, LSIQ…HFIL, ILFV…LMKS, and IFSI…PSPI. Residues 248-276 are compositionally biased toward basic and acidic residues; the sequence is ESSKGEEKKKTEKERDVEMETISKTKKIE. Disordered regions lie at residues 248-277, 617-643, 658-700, 782-806, and 1537-1607; these read ESSK…KIEQ, FDFE…GIRS, DEDT…QAEE, TSDY…KRKE, and YIDP…RKKK. Positions 617-636 are enriched in acidic residues; it reads FDFEEEEEEEEEEDDEEEPT. A compositionally biased stretch (polar residues) spans 674–683; that stretch reads AKNSDQAKNS. Basic and acidic residues-rich tracts occupy residues 684–700, 789–806, and 1537–1576; these read DQAK…QAEE, GAKE…KRKE, and YIDP…ERQH.

Belongs to the TIC214 family. Part of the Tic complex.

It localises to the plastid. Its subcellular location is the chloroplast inner membrane. Its function is as follows. Involved in protein precursor import into chloroplasts. May be part of an intermediate translocation complex acting as a protein-conducting channel at the inner envelope. The chain is Protein TIC 214 from Nuphar advena (Common spatterdock).